The following is a 436-amino-acid chain: Phosphomethylpyrimidine synthase (436 aa).

Substrate contacts are provided by residues Asn-69, Met-98, Tyr-127, His-163, 185-187, 226-229, and Glu-265; these read SRG and DACR. Residue His-269 participates in Zn(2+) binding. Tyr-292 contributes to the substrate binding site. His-333 is a binding site for Zn(2+). [4Fe-4S] cluster-binding residues include Cys-409, Cys-412, and Cys-416.

The protein belongs to the ThiC family. Requires [4Fe-4S] cluster as cofactor.

The catalysed reaction is 5-amino-1-(5-phospho-beta-D-ribosyl)imidazole + S-adenosyl-L-methionine = 4-amino-2-methyl-5-(phosphooxymethyl)pyrimidine + CO + 5'-deoxyadenosine + formate + L-methionine + 3 H(+). Its pathway is cofactor biosynthesis; thiamine diphosphate biosynthesis. Catalyzes the synthesis of the hydroxymethylpyrimidine phosphate (HMP-P) moiety of thiamine from aminoimidazole ribotide (AIR) in a radical S-adenosyl-L-methionine (SAM)-dependent reaction. This is Phosphomethylpyrimidine synthase from Clostridium acetobutylicum (strain ATCC 824 / DSM 792 / JCM 1419 / IAM 19013 / LMG 5710 / NBRC 13948 / NRRL B-527 / VKM B-1787 / 2291 / W).